The following is a 495-amino-acid chain: UDP-N-acetylmuramoyl-L-alanyl-D-glutamate--2,6-diaminopimelate ligase (495 aa).

Position 29 (Ser29) interacts with UDP-N-acetyl-alpha-D-muramoyl-L-alanyl-D-glutamate. 111 to 117 (GTNGKTS) contacts ATP. UDP-N-acetyl-alpha-D-muramoyl-L-alanyl-D-glutamate contacts are provided by residues 153–154 (TT), Ser180, Gln186, and Arg188. An N6-carboxylysine modification is found at Lys220. Meso-2,6-diaminopimelate is bound by residues Arg384, 408-411 (DNPR), Gly459, and Glu463. Residues 408-411 (DNPR) carry the Meso-diaminopimelate recognition motif motif.

The protein belongs to the MurCDEF family. MurE subfamily. Mg(2+) is required as a cofactor. Carboxylation is probably crucial for Mg(2+) binding and, consequently, for the gamma-phosphate positioning of ATP.

It is found in the cytoplasm. It catalyses the reaction UDP-N-acetyl-alpha-D-muramoyl-L-alanyl-D-glutamate + meso-2,6-diaminopimelate + ATP = UDP-N-acetyl-alpha-D-muramoyl-L-alanyl-gamma-D-glutamyl-meso-2,6-diaminopimelate + ADP + phosphate + H(+). It participates in cell wall biogenesis; peptidoglycan biosynthesis. Functionally, catalyzes the addition of meso-diaminopimelic acid to the nucleotide precursor UDP-N-acetylmuramoyl-L-alanyl-D-glutamate (UMAG) in the biosynthesis of bacterial cell-wall peptidoglycan. The chain is UDP-N-acetylmuramoyl-L-alanyl-D-glutamate--2,6-diaminopimelate ligase from Xylella fastidiosa (strain Temecula1 / ATCC 700964).